Reading from the N-terminus, the 228-residue chain is Phosphoribosylformylglycinamidine synthase subunit PurQ (228 aa).

Residues 3–226 (FAVIVFPGSN…VKYWRETHVV (224 aa)) enclose the Glutamine amidotransferase type-1 domain. Catalysis depends on Cys86, which acts as the Nucleophile. Catalysis depends on residues His195 and Glu197.

Part of the FGAM synthase complex composed of 1 PurL, 1 PurQ and 2 PurS subunits.

It is found in the cytoplasm. The enzyme catalyses N(2)-formyl-N(1)-(5-phospho-beta-D-ribosyl)glycinamide + L-glutamine + ATP + H2O = 2-formamido-N(1)-(5-O-phospho-beta-D-ribosyl)acetamidine + L-glutamate + ADP + phosphate + H(+). It catalyses the reaction L-glutamine + H2O = L-glutamate + NH4(+). The protein operates within purine metabolism; IMP biosynthesis via de novo pathway; 5-amino-1-(5-phospho-D-ribosyl)imidazole from N(2)-formyl-N(1)-(5-phospho-D-ribosyl)glycinamide: step 1/2. Part of the phosphoribosylformylglycinamidine synthase complex involved in the purines biosynthetic pathway. Catalyzes the ATP-dependent conversion of formylglycinamide ribonucleotide (FGAR) and glutamine to yield formylglycinamidine ribonucleotide (FGAM) and glutamate. The FGAM synthase complex is composed of three subunits. PurQ produces an ammonia molecule by converting glutamine to glutamate. PurL transfers the ammonia molecule to FGAR to form FGAM in an ATP-dependent manner. PurS interacts with PurQ and PurL and is thought to assist in the transfer of the ammonia molecule from PurQ to PurL. In Geobacillus sp. (strain WCH70), this protein is Phosphoribosylformylglycinamidine synthase subunit PurQ.